The primary structure comprises 314 residues: MVKKNFIPSVSLVRRDLPTLVTTTTSSTALSKPTSSVVSETSSKSLPSLTSSAFSTSSGATSSSSLIVASITPPSTAGNPFILNAADKPNGTVYIAVGAVIGAIFISILIWWLVSXYLSRRFTMTNSYANDSKNLYRGHHKHSSSLQSNPFDINDEKSYMQDDWDSMSQLESSQYEDAASPFNPIQDPFTDNRRSLFISPTLQVSQYEKSHSRHQSKDTNIFIDDPSLYVGTYLEEEEEEERKLNLNRPQRAASPERKEKKINSMEGYHKRNQSSLGLIPVASATSNTSSPKKAHKRQAPSMFLDDVLNGREII.

The segment at 32–60 is disordered; sequence KPTSSVVSETSSKSLPSLTSSAFSTSSGA. Residues 93 to 113 traverse the membrane as a helical segment; it reads VYIAVGAVIGAIFISILIWWL. A phosphoserine mark is found at Ser-148, Ser-254, and Ser-274. The interval 240 to 309 is disordered; it reads EERKLNLNRP…PSMFLDDVLN (70 aa). The segment covering 254–269 has biased composition (basic and acidic residues); that stretch reads SPERKEKKINSMEGYH.

This sequence belongs to the PRM5 family.

The protein localises to the vacuole membrane. This Saccharomyces cerevisiae (strain FostersB) (Baker's yeast) protein is Vacuolar membrane protein FOSTERSB_4073.